We begin with the raw amino-acid sequence, 264 residues long: Thymidylate synthase (264 aa).

Position 21 (Arg-21) interacts with dUMP. Residue His-51 participates in (6R)-5,10-methylene-5,6,7,8-tetrahydrofolate binding. 126–127 (RR) lines the dUMP pocket. Cys-146 (nucleophile) is an active-site residue. Residues 166 to 169 (RSAD), Asn-177, and 207 to 209 (HIY) each bind dUMP. (6R)-5,10-methylene-5,6,7,8-tetrahydrofolate is bound at residue Asp-169. Ser-263 lines the (6R)-5,10-methylene-5,6,7,8-tetrahydrofolate pocket.

It belongs to the thymidylate synthase family. Bacterial-type ThyA subfamily. As to quaternary structure, homodimer.

It is found in the cytoplasm. The enzyme catalyses dUMP + (6R)-5,10-methylene-5,6,7,8-tetrahydrofolate = 7,8-dihydrofolate + dTMP. Its pathway is pyrimidine metabolism; dTTP biosynthesis. Catalyzes the reductive methylation of 2'-deoxyuridine-5'-monophosphate (dUMP) to 2'-deoxythymidine-5'-monophosphate (dTMP) while utilizing 5,10-methylenetetrahydrofolate (mTHF) as the methyl donor and reductant in the reaction, yielding dihydrofolate (DHF) as a by-product. This enzymatic reaction provides an intracellular de novo source of dTMP, an essential precursor for DNA biosynthesis. The sequence is that of Thymidylate synthase from Bacillus pumilus (strain SAFR-032).